The chain runs to 311 residues: Pyrimidine-specific ribonucleoside hydrolase RihA (311 aa).

His240 is an active-site residue.

It belongs to the IUNH family. RihA subfamily.

Hydrolyzes with equal efficiency cytidine or uridine to ribose and cytosine or uracil, respectively. This chain is Pyrimidine-specific ribonucleoside hydrolase RihA, found in Escherichia coli O45:K1 (strain S88 / ExPEC).